A 315-amino-acid polypeptide reads, in one-letter code: Protoheme IX farnesyltransferase (315 aa).

9 helical membrane-spanning segments follow: residues 32 to 52 (VMSLVVFTGLVGLVLAPGHMN), 53 to 73 (PVLAVISILCIAVGAGASGAL), 93 to 113 (IPAGIIAPNQVLAFGLTLSAF), 120 to 140 (LMVNWLAAALLAFTIFFYAVI), 153 to 173 (IVIGGAAGAFPPMIGWAAATG), 180 to 200 (LVLFMIIFLWTPPHFWALSLF), 226 to 246 (ALFYAVLMAPVGVLPWVMGFA), 249 to 269 (FYGVVSTLLGLAFVYYAWRLW), and 295 to 315 (IFAVLLFEALTFKLLAAFGVF).

It belongs to the UbiA prenyltransferase family. Protoheme IX farnesyltransferase subfamily.

The protein localises to the cell inner membrane. It catalyses the reaction heme b + (2E,6E)-farnesyl diphosphate + H2O = Fe(II)-heme o + diphosphate. The protein operates within porphyrin-containing compound metabolism; heme O biosynthesis; heme O from protoheme: step 1/1. Functionally, converts heme B (protoheme IX) to heme O by substitution of the vinyl group on carbon 2 of heme B porphyrin ring with a hydroxyethyl farnesyl side group. The sequence is that of Protoheme IX farnesyltransferase from Brucella canis (strain ATCC 23365 / NCTC 10854 / RM-666).